Consider the following 209-residue polypeptide: Uracil phosphoribosyltransferase (209 aa).

Residues arginine 79, arginine 104, and 131 to 139 contribute to the 5-phospho-alpha-D-ribose 1-diphosphate site; that span reads DPMLATGGS. Uracil-binding positions include isoleucine 194 and 199–201; that span reads GDA. Residue aspartate 200 participates in 5-phospho-alpha-D-ribose 1-diphosphate binding.

It belongs to the UPRTase family. Requires Mg(2+) as cofactor.

It catalyses the reaction UMP + diphosphate = 5-phospho-alpha-D-ribose 1-diphosphate + uracil. It participates in pyrimidine metabolism; UMP biosynthesis via salvage pathway; UMP from uracil: step 1/1. Allosterically activated by GTP. Functionally, catalyzes the conversion of uracil and 5-phospho-alpha-D-ribose 1-diphosphate (PRPP) to UMP and diphosphate. In Citrifermentans bemidjiense (strain ATCC BAA-1014 / DSM 16622 / JCM 12645 / Bem) (Geobacter bemidjiensis), this protein is Uracil phosphoribosyltransferase.